A 701-amino-acid chain; its full sequence is Polyribonucleotide nucleotidyltransferase (701 aa).

Mg(2+) is bound by residues Asp487 and Asp493. The KH domain occupies 554–613 (PTMIAMKIDTDKIRDVIGKGGATIRAICEETKASIDIEDDGSIKIFGETKEAADAAKQRI). In terms of domain architecture, S1 motif spans 623–691 (GKIYVGKVER…NRGRIKLSIK (69 aa)).

Belongs to the polyribonucleotide nucleotidyltransferase family. In terms of assembly, component of the RNA degradosome, which is a multiprotein complex involved in RNA processing and mRNA degradation. The cofactor is Mg(2+).

It is found in the cytoplasm. It catalyses the reaction RNA(n+1) + phosphate = RNA(n) + a ribonucleoside 5'-diphosphate. Involved in mRNA degradation. Catalyzes the phosphorolysis of single-stranded polyribonucleotides processively in the 3'- to 5'-direction. This chain is Polyribonucleotide nucleotidyltransferase, found in Pseudomonas putida (Arthrobacter siderocapsulatus).